Consider the following 504-residue polypeptide: ATP synthase subunit alpha (504 aa).

ATP is bound at residue 169 to 176 (GDRQIGKT).

Belongs to the ATPase alpha/beta chains family. As to quaternary structure, F-type ATPases have 2 components, CF(1) - the catalytic core - and CF(0) - the membrane proton channel. CF(1) has five subunits: alpha(3), beta(3), gamma(1), delta(1), epsilon(1). CF(0) has three main subunits: a(1), b(2) and c(9-12). The alpha and beta chains form an alternating ring which encloses part of the gamma chain. CF(1) is attached to CF(0) by a central stalk formed by the gamma and epsilon chains, while a peripheral stalk is formed by the delta and b chains.

It localises to the cell membrane. It carries out the reaction ATP + H2O + 4 H(+)(in) = ADP + phosphate + 5 H(+)(out). Produces ATP from ADP in the presence of a proton gradient across the membrane. The alpha chain is a regulatory subunit. The polypeptide is ATP synthase subunit alpha (Syntrophomonas wolfei subsp. wolfei (strain DSM 2245B / Goettingen)).